The chain runs to 527 residues: Tetanolysin (527 aa).

A signal peptide spans 1-32; sequence MNKNVLKFVSRSLLIFSMTGLISNYNSSNVLA. The next 4 membrane-spanning stretches (beta stranded) occupy residues 215–228, 235–244, 313–322, and 330–342; these read QSQLSAAVGCNFKA, IDFDSIFKGE, SSHVKAAFKA, and SSNAEYKDILNQS. The Conserved undecapeptide signature appears at 484-494; it reads ECTGLAWEWWR. The short motif at 516–517 is the Cholesterol binding element; it reads TL.

It belongs to the cholesterol-dependent cytolysin family. As to quaternary structure, homooligomeric pore complex containing 35-50 subunits; when inserted in the host membrane. Purified 48 and 53 kDa proteins with 4 different pIs (6.1, 5.6, 5.3 and 6.6) in decreasing order of activity.

It localises to the secreted. The protein resides in the host cell membrane. Cytolysis of host cells is inhibited by cholesterol. Functionally, a cholesterol-dependent toxin that causes cytolysis by forming pores in cholesterol-containing host membranes. After binding to target membranes, the protein undergoes a major conformation change, leading to its insertion in the host membrane and formation of an oligomeric pore complex. Cholesterol is required for binding to host membranes, membrane insertion and pore formation; cholesterol binding is mediated by a Thr-Leu pair in the C-terminus. This chain is Tetanolysin, found in Clostridium tetani (strain Massachusetts / E88).